The sequence spans 331 residues: MVSYKEAGVNIEEGYKSVDLIKKHASKTFTKGVLNNLGSFAGMFELPKYKNPVLVSGTDGVGTKLDIAFRMKKYNTVGIDCVAMCINDILCHGAKPLFFLDYIACGKLEAEVAAQLVEGVSNGCIQSECALIGGETAEMPGFYRDGEYDIAGFAVGIAEKDEIIDGSKIEDGDILIGIASSGPHSNGYSLIRKLVEDLHKDFEGNKIGNTLLTPTKIYVKPVMKLLEKYNIKGMAHVTGGGFYENIPRMFKEDFTAVINKKSYPLPNIFSHLISLGIEEDHMYNTFNMGIGFVLCVNEKDGENIIKDLIEMGEKGYKIGYVKKGDKSVELI.

This sequence belongs to the AIR synthase family.

It localises to the cytoplasm. It carries out the reaction 2-formamido-N(1)-(5-O-phospho-beta-D-ribosyl)acetamidine + ATP = 5-amino-1-(5-phospho-beta-D-ribosyl)imidazole + ADP + phosphate + H(+). The protein operates within purine metabolism; IMP biosynthesis via de novo pathway; 5-amino-1-(5-phospho-D-ribosyl)imidazole from N(2)-formyl-N(1)-(5-phospho-D-ribosyl)glycinamide: step 2/2. The protein is Phosphoribosylformylglycinamidine cyclo-ligase of Clostridium botulinum (strain ATCC 19397 / Type A).